The sequence spans 577 residues: Arginine--tRNA ligase (577 aa).

A 'HIGH' region motif is present at residues 122–132 (PNVAKEMHVGH).

This sequence belongs to the class-I aminoacyl-tRNA synthetase family. Monomer.

It localises to the cytoplasm. It catalyses the reaction tRNA(Arg) + L-arginine + ATP = L-arginyl-tRNA(Arg) + AMP + diphosphate. The sequence is that of Arginine--tRNA ligase from Shigella flexneri serotype 5b (strain 8401).